We begin with the raw amino-acid sequence, 619 residues long: DNA mismatch repair protein MutL (619 aa).

Over residues 364–375 (EPASAREPAAPR) the composition is skewed to low complexity. The disordered stretch occupies residues 364-399 (EPASAREPAAPRYSTSSGATGGRQPAASWPHAQPGY).

This sequence belongs to the DNA mismatch repair MutL/HexB family.

Its function is as follows. This protein is involved in the repair of mismatches in DNA. It is required for dam-dependent methyl-directed DNA mismatch repair. May act as a 'molecular matchmaker', a protein that promotes the formation of a stable complex between two or more DNA-binding proteins in an ATP-dependent manner without itself being part of a final effector complex. In Citrobacter koseri (strain ATCC BAA-895 / CDC 4225-83 / SGSC4696), this protein is DNA mismatch repair protein MutL.